Here is a 1057-residue protein sequence, read N- to C-terminus: Protein transport protein Sec16B (1057 aa).

The span at 1 to 15 (MELWVPQTQGRTTGP) shows a compositional bias: polar residues. The tract at residues 1–86 (MELWVPQTQG…VSGADYLKGS (86 aa)) is disordered. Positions 45 to 63 (QDTHKNSKPQQDPRDDHQQ) are enriched in basic and acidic residues. Residues S70, S137, S161, and S185 each carry the phosphoserine modification. The tract at residues 185 to 220 (SAFGLEQPGEFFPESGAQKQKPSLTSKSNLLQQHES) is disordered. The span at 201-213 (AQKQKPSLTSKSN) shows a compositional bias: polar residues. S245 carries the phosphoserine modification. The segment at 263-708 (APMRFYVPHV…KHKELEQTRT (446 aa)) is central conserved domain (CCD); required for localization to endoplasmic reticulum exit sites. A compositionally biased stretch (basic and acidic residues) spans 704–715 (EQTRTGDLRDPD). 2 disordered regions span residues 704–778 (EQTR…TYSE) and 849–1057 (AVIS…SQPC). Residues 737–764 (GQQNYSEDSEYSSALWPTSEQTSLTNPT) show a composition bias toward polar residues. T856 carries the post-translational modification Phosphothreonine. Residues S866, S869, S872, and S881 each carry the phosphoserine modification. A compositionally biased stretch (basic and acidic residues) spans 883-903 (GADKPPHPDASQKEKLRDGKN). Over residues 906 to 926 (SSGFGWFSWFRSKPASSVSTS) the composition is skewed to low complexity. A compositionally biased stretch (acidic residues) spans 927 to 938 (GDEDSVDSSDSE). A compositionally biased stretch (gly residues) spans 990 to 999 (EGVGIGGFSG). Polar residues predominate over residues 1028 to 1043 (NPSQVPQLPTASSLNR).

This sequence belongs to the SEC16 family. As to quaternary structure, SEC16A and SEC16B are each present in multiple copies in a heteromeric complex. Interacts with TFG. Interacts with SEC13. Liver, kidney, heart, spleen and brain.

The protein localises to the endoplasmic reticulum membrane. It localises to the golgi apparatus membrane. Plays a role in the organization of the endoplasmic reticulum exit sites (ERES), also known as transitional endoplasmic reticulum (tER). Required for secretory cargo traffic from the endoplasmic reticulum to the Golgi apparatus. Involved in peroxisome biogenesis. Regulates the transport of peroxisomal biogenesis factors PEX3 and PEX16 from the ER to peroxisomes. The protein is Protein transport protein Sec16B (Sec16b) of Rattus norvegicus (Rat).